The following is a 521-amino-acid chain: MAKITRALISVSDKTGIVEFSRELAGYGVEILSTGGTAKLLREAGLKVKDVSEFTGFPEMLDGRVKTLHPKVHGGLLGMRGNPEHVATMKAHGIEPIDMVVVNLYPFEATVAKPDCTLEDAIENIDIGGPTMLRSAAKNNADVTVVVDHNDYRLVLDEMKAAGGGVSKETNFRLAVKVYQHTAAYDGAISNWLGARTGEGVAAYPDTLTLQFKKAQGMRYGENPHQSAAFYVERDVKEASVATARQLQGKELSYNNIGDTDAALECVKQFAEGPGCVIVKHANPCGVAIGDTLLDAYDRAYKTDPESAFGGIIAFNGELDEATAKAIVERQFVEVIIAPKVSAKASEVVAAKKNVRLLECGTWQKEPMPRLDFKRVNGGLLVQYTDLALHGELKVVTKRAPTEKEMIDLLFTWRVAKFVKSNAIVYGKDGMTIGVGAGQMSRVNSARIAAIKAEHAGLPVAGSVMASDAFFPFRDGLDNAAAVGITAVIQPGGSMRDEEVIAAADEHGMAMVFTSMRHFRH.

The region spanning 1–147 (MAKITRALIS…KNNADVTVVV (147 aa)) is the MGS-like domain.

This sequence belongs to the PurH family.

It catalyses the reaction (6R)-10-formyltetrahydrofolate + 5-amino-1-(5-phospho-beta-D-ribosyl)imidazole-4-carboxamide = 5-formamido-1-(5-phospho-D-ribosyl)imidazole-4-carboxamide + (6S)-5,6,7,8-tetrahydrofolate. It carries out the reaction IMP + H2O = 5-formamido-1-(5-phospho-D-ribosyl)imidazole-4-carboxamide. Its pathway is purine metabolism; IMP biosynthesis via de novo pathway; 5-formamido-1-(5-phospho-D-ribosyl)imidazole-4-carboxamide from 5-amino-1-(5-phospho-D-ribosyl)imidazole-4-carboxamide (10-formyl THF route): step 1/1. The protein operates within purine metabolism; IMP biosynthesis via de novo pathway; IMP from 5-formamido-1-(5-phospho-D-ribosyl)imidazole-4-carboxamide: step 1/1. The polypeptide is Bifunctional purine biosynthesis protein PurH (Geotalea uraniireducens (strain Rf4) (Geobacter uraniireducens)).